The chain runs to 90 residues: Acylphosphatase (90 aa).

One can recognise an Acylphosphatase-like domain in the interval 3-88 (TWHMTAHGRV…GKFEDFDLRP (86 aa)). Catalysis depends on residues R18 and N36.

It belongs to the acylphosphatase family.

It catalyses the reaction an acyl phosphate + H2O = a carboxylate + phosphate + H(+). In Cupriavidus pinatubonensis (strain JMP 134 / LMG 1197) (Cupriavidus necator (strain JMP 134)), this protein is Acylphosphatase (acyP).